Consider the following 286-residue polypeptide: Beta-lactamase SHV-46 (286 aa).

A signal peptide spans 1 to 21 (MRYIRLCIISLLATLPLAVHA). The active-site Acyl-ester intermediate is serine 66. Cysteine 73 and cysteine 119 form a disulfide bridge. Residue glutamate 164 is the Proton acceptor of the active site. 230–232 (KTG) contributes to the substrate binding site.

It belongs to the class-A beta-lactamase family.

It catalyses the reaction a beta-lactam + H2O = a substituted beta-amino acid. The polypeptide is Beta-lactamase SHV-46 (bla) (Klebsiella oxytoca).